The sequence spans 724 residues: Acyl-coenzyme A oxidase 2 (724 aa).

A disordered region spans residues 1–48; sequence MAMLSQPNDGHDHPEKKDPDTTPKQVAGVISSQDPPHPAKDVAEERAR. Composition is skewed to basic and acidic residues over residues 9 to 21 and 37 to 48; these read DGHD…DPDT and HPAKDVAEERAR.

The protein belongs to the acyl-CoA oxidase family. The cofactor is FAD.

The protein localises to the peroxisome. The catalysed reaction is a 2,3-saturated acyl-CoA + O2 = a (2E)-enoyl-CoA + H2O2. The protein operates within lipid metabolism; peroxisomal fatty acid beta-oxidation. This chain is Acyl-coenzyme A oxidase 2 (POX2), found in Candida tropicalis (Yeast).